We begin with the raw amino-acid sequence, 495 residues long: Probable cytosol aminopeptidase (495 aa).

Mn(2+)-binding residues include Lys-258 and Asp-263. Lys-270 is a catalytic residue. Residues Asp-281, Asp-340, and Glu-342 each contribute to the Mn(2+) site. Residue Arg-344 is part of the active site.

It belongs to the peptidase M17 family. Mn(2+) serves as cofactor.

The protein localises to the cytoplasm. The catalysed reaction is Release of an N-terminal amino acid, Xaa-|-Yaa-, in which Xaa is preferably Leu, but may be other amino acids including Pro although not Arg or Lys, and Yaa may be Pro. Amino acid amides and methyl esters are also readily hydrolyzed, but rates on arylamides are exceedingly low.. It carries out the reaction Release of an N-terminal amino acid, preferentially leucine, but not glutamic or aspartic acids.. Presumably involved in the processing and regular turnover of intracellular proteins. Catalyzes the removal of unsubstituted N-terminal amino acids from various peptides. This chain is Probable cytosol aminopeptidase, found in Leptospira interrogans serogroup Icterohaemorrhagiae serovar copenhageni (strain Fiocruz L1-130).